The chain runs to 298 residues: Glutamyl-Q tRNA(Asp) synthetase (298 aa).

Residues R12–T16 and E48 each bind L-glutamate. The 'HIGH' region motif lies at P15–S25. The Zn(2+) site is built by C104, C106, Y118, and C122. Positions 175 and 193 each coordinate L-glutamate. The 'KMSKS' region signature appears at K231–S235. K234 contributes to the ATP binding site.

Belongs to the class-I aminoacyl-tRNA synthetase family. GluQ subfamily. The cofactor is Zn(2+).

Catalyzes the tRNA-independent activation of glutamate in presence of ATP and the subsequent transfer of glutamate onto a tRNA(Asp). Glutamate is transferred on the 2-amino-5-(4,5-dihydroxy-2-cyclopenten-1-yl) moiety of the queuosine in the wobble position of the QUC anticodon. This Pseudomonas fluorescens (strain ATCC BAA-477 / NRRL B-23932 / Pf-5) protein is Glutamyl-Q tRNA(Asp) synthetase.